A 400-amino-acid polypeptide reads, in one-letter code: Subtilisin-like protease 11 (400 aa).

The N-terminal stretch at 1 to 19 is a signal peptide; that stretch reads MGLFKVIFTAVAALSAVDA. Residues 20–117 constitute a propeptide that is removed on maturation; that stretch reads AELLSSAKSK…VEHDRHVYIS (98 aa). The Inhibitor I9 domain maps to 35-116; that stretch reads SYLVVMKDSV…FVEHDRHVYI (82 aa). The 274-residue stretch at 127–400 folds into the Peptidase S8 domain; the sequence is SWGLGRVSHR…NKLLYNRSGK (274 aa). N-linked (GlcNAc...) asparagine glycosylation is present at Asn138. Asp159 (charge relay system) is an active-site residue. The N-linked (GlcNAc...) asparagine glycan is linked to Asn181. Catalysis depends on His191, which acts as the Charge relay system. Asn252 and Asn337 each carry an N-linked (GlcNAc...) asparagine glycan. Ser346 acts as the Charge relay system in catalysis. 2 N-linked (GlcNAc...) asparagine glycosylation sites follow: Asn388 and Asn396.

It belongs to the peptidase S8 family.

It localises to the secreted. In terms of biological role, secreted subtilisin-like serine protease with keratinolytic activity that contributes to pathogenicity. This is Subtilisin-like protease 11 (SUB11) from Trichophyton verrucosum (strain HKI 0517).